The following is a 660-amino-acid chain: Bifunctional polymyxin resistance protein ArnA (660 aa).

The segment at 1–304 (MKAIVFAYHD…EMGIVTDVRL (304 aa)) is formyltransferase ArnAFT. His-104 (proton donor; for formyltransferase activity) is an active-site residue. (6R)-10-formyltetrahydrofolate-binding positions include Arg-114 and 136–140 (VKRPD). The tract at residues 314–660 (RRTRVLILGV…RTTVQEGDGA (347 aa)) is dehydrogenase ArnADH. NAD(+) contacts are provided by residues Asp-347 and 368–369 (DI). Residues Ala-393, Tyr-398, and 432–433 (TS) each bind UDP-alpha-D-glucuronate. The Proton acceptor; for decarboxylase activity role is filled by Glu-434. Residues Arg-460, Asn-492, 526–535 (KLMDGGAQKR), and Tyr-613 contribute to the UDP-alpha-D-glucuronate site. The active-site Proton donor; for decarboxylase activity is Arg-619.

It in the N-terminal section; belongs to the Fmt family. UDP-L-Ara4N formyltransferase subfamily. This sequence in the C-terminal section; belongs to the NAD(P)-dependent epimerase/dehydratase family. UDP-glucuronic acid decarboxylase subfamily. In terms of assembly, homohexamer, formed by a dimer of trimers.

It carries out the reaction UDP-alpha-D-glucuronate + NAD(+) = UDP-beta-L-threo-pentopyranos-4-ulose + CO2 + NADH. The enzyme catalyses UDP-4-amino-4-deoxy-beta-L-arabinose + (6R)-10-formyltetrahydrofolate = UDP-4-deoxy-4-formamido-beta-L-arabinose + (6S)-5,6,7,8-tetrahydrofolate + H(+). It functions in the pathway nucleotide-sugar biosynthesis; UDP-4-deoxy-4-formamido-beta-L-arabinose biosynthesis; UDP-4-deoxy-4-formamido-beta-L-arabinose from UDP-alpha-D-glucuronate: step 1/3. Its pathway is nucleotide-sugar biosynthesis; UDP-4-deoxy-4-formamido-beta-L-arabinose biosynthesis; UDP-4-deoxy-4-formamido-beta-L-arabinose from UDP-alpha-D-glucuronate: step 3/3. The protein operates within bacterial outer membrane biogenesis; lipopolysaccharide biosynthesis. Its function is as follows. Bifunctional enzyme that catalyzes the oxidative decarboxylation of UDP-glucuronic acid (UDP-GlcUA) to UDP-4-keto-arabinose (UDP-Ara4O) and the addition of a formyl group to UDP-4-amino-4-deoxy-L-arabinose (UDP-L-Ara4N) to form UDP-L-4-formamido-arabinose (UDP-L-Ara4FN). The modified arabinose is attached to lipid A and is required for resistance to polymyxin and cationic antimicrobial peptides. In Serratia proteamaculans (strain 568), this protein is Bifunctional polymyxin resistance protein ArnA.